Here is an 86-residue protein sequence, read N- to C-terminus: Mu-theraphotoxin-Cg2a 3 (86 aa).

A signal peptide spans 1-21; it reads MKVSVVITLAVLGVMFVWASA. A propeptide spanning residues 22–50 is cleaved from the precursor; the sequence is AELKERGSDQRDSPAWIKSMERIFQSEER. 3 disulfide bridges follow: C52–C66, C59–C71, and C65–C78. F84 is subject to Phenylalanine amide.

The protein belongs to the neurotoxin 10 (Hwtx-1) family. 37 (Jztx-31) subfamily. In terms of tissue distribution, expressed by the venom gland.

The protein localises to the secreted. Its function is as follows. Inhibits both peak current and fast inactivation of voltage-gated sodium channels (Nav) channels. Inhibits the inactivation of Nav on DRG neurons (EC(50)=1.77 uM) and peak current of cardiac myocytes (IC(50)=0.90 uM). This chain is Mu-theraphotoxin-Cg2a 3, found in Chilobrachys guangxiensis (Chinese earth tiger tarantula).